A 232-amino-acid polypeptide reads, in one-letter code: tRNA pseudouridine synthase B (232 aa).

The Nucleophile role is filled by D53.

This sequence belongs to the pseudouridine synthase TruB family. Type 1 subfamily.

It catalyses the reaction uridine(55) in tRNA = pseudouridine(55) in tRNA. Its function is as follows. Responsible for synthesis of pseudouridine from uracil-55 in the psi GC loop of transfer RNAs. The chain is tRNA pseudouridine synthase B from Malacoplasma penetrans (strain HF-2) (Mycoplasma penetrans).